Reading from the N-terminus, the 131-residue chain is Putative gamma-taxilin 2 (131 aa).

It belongs to the taxilin family.

The protein is Putative gamma-taxilin 2 (TXLNGY) of Pan troglodytes (Chimpanzee).